A 649-amino-acid chain; its full sequence is MSHIIELPEMLANQIAAGEVIERPASVVKELVENAIDAGSSQIIIEIEEAGLKKVQITDNGHGIAHDEVELALRRHATSKIKNQADLFRIRTLGFRGEALPSIASVSVLTLLTAVDGASHGTKLVARGGEVEEVIPATSPVGTKVCVEDLFFNTPARLKYMKSQQAELSHIIDIVNRLGLAHPEISFSLISDGKEMTRTAGTGQLRQAIAGIYGLVSAKKMIEIENSDLDFEISGFVSLPELTRANRNYISLFINGRYIKNFLLNRAILDGFGSKLMVGRFPLAVIHIHIDPYLADVNVHPTKQEVRISKEKELMTLVSEAIANSLKEQTLIPDALENLAKSTVRNREKVDQTILPLKENTLYYEKTEPSRPSQTEVADYQVELTDEGQDLTLFAKETLDRLTKPAKLHFAERKPANYDQLDHPELDLASIDKAYDKLEREEASSFPELEFFGQMHGTYLFAQGRDGLYIIDQHAAQERVKYEEYRESIGNVDQSQQQLLVPYIFEFPADDALRLKERMPLLEEVGVFLAEYGENQFILREHPIWMAEEEIESGIYEMCDMLLLTKEVSIKKYRAELAIMMSCKRSIKANHRIDDHSARQLLYQLSQCDNPYNCPHGRPVLVHFTKSDMEKMFRRIQENHTSLRELGKY.

It belongs to the DNA mismatch repair MutL/HexB family.

In terms of biological role, this protein is involved in the repair of mismatches in DNA. It is required for dam-dependent methyl-directed DNA mismatch repair. May act as a 'molecular matchmaker', a protein that promotes the formation of a stable complex between two or more DNA-binding proteins in an ATP-dependent manner without itself being part of a final effector complex. This chain is DNA mismatch repair protein MutL, found in Streptococcus pneumoniae (strain P1031).